A 158-amino-acid polypeptide reads, in one-letter code: Phosphopantetheine adenylyltransferase (158 aa).

Residue Thr-9 coordinates substrate. ATP-binding positions include 9 to 10 (TF) and His-17. Residues Lys-41, Leu-73, and Arg-87 each coordinate substrate. ATP is bound by residues 88–90 (GVR), Glu-98, and 123–129 (WSYVSST).

This sequence belongs to the bacterial CoaD family. In terms of assembly, homohexamer. Requires Mg(2+) as cofactor.

It localises to the cytoplasm. It carries out the reaction (R)-4'-phosphopantetheine + ATP + H(+) = 3'-dephospho-CoA + diphosphate. It functions in the pathway cofactor biosynthesis; coenzyme A biosynthesis; CoA from (R)-pantothenate: step 4/5. Its function is as follows. Reversibly transfers an adenylyl group from ATP to 4'-phosphopantetheine, yielding dephospho-CoA (dPCoA) and pyrophosphate. This chain is Phosphopantetheine adenylyltransferase, found in Pasteurella multocida (strain Pm70).